The chain runs to 453 residues: METRGPGLAVRAESRRLVGIGPRAPPGRVGLQPSGRLDRRGGAGTMGYKDNDGEEEEREGGAAGPRGSRLPPITGGASELAKRKVKKKKRKKKTKGSGKGDDKHQSQSLKSQPLSSSFHDILSPCKERGPKPEHRQSKVEKKHLPSDSSTVSLPDFAEIENLANRINESLRWDGILADPEAEKERIRIYKLNRRKRYRCLALKGFHPDPEALKGFHPDPDALKGFHPDPEALKGFHPDPEALKGFHPDPEALKGFHPDPEALKGIHPDPEALKGIHPDPEALKGFHPDPEALKGFHPDPEALKGFHTDPEALKGFHIDPEALKGFHPDPKALKGFHPDPKALKGFHTDPEALKGFHPDPKALKGFHPDPEALKGFHPDPEALKGFHPDPEALKGFHTDPNAEEAPENLPYLSDKDGSSSHRQPTSKAECPNLCFEGNLTPKLLHSDLAPTLLE.

The interval 1-152 is disordered; that stretch reads METRGPGLAV…HLPSDSSTVS (152 aa). Residues 82 to 103 form a lysine-rich domain region; the sequence is KRKVKKKKRKKKTKGSGKGDDK. Over residues 83-96 the composition is skewed to basic residues; the sequence is RKVKKKKRKKKTKG. Low complexity predominate over residues 106–117; it reads SQSLKSQPLSSS. The span at 125–145 shows a compositional bias: basic and acidic residues; the sequence is CKERGPKPEHRQSKVEKKHLP. Positions 145–197 are interaction with ATE1; sequence PSDSSTVSLPDFAEIENLANRINESLRWDGILADPEAEKERIRIYKLNRRKRY. Repeat copies occupy residues 201–210, 211–220, 221–230, 231–240, 241–250, 251–260, 261–270, 271–280, 281–290, 291–300, 301–310, 311–320, 321–330, 331–340, 341–350, 351–360, 361–370, 371–380, 381–390, and 391–400. The interval 201 to 400 is 20 X 10 AA approximate tandem repeat of A-L-K-G-F-H-P-D-P-E; the sequence is ALKGFHPDPE…ALKGFHTDPN (200 aa). Disordered stretches follow at residues 225 to 306 and 320 to 432; these read FHPD…KGFH and EALK…CPNL. Over residues 320-396 the composition is skewed to basic and acidic residues; that stretch reads EALKGFHPDP…PDPEALKGFH (77 aa).

In terms of assembly, self-associates (via Lys-rich domain); targets LIAT1 to the nucleolus. Interacts with ATE1; it is not a substrate of ATE1, the interaction takes place in the cytoplasm and seems to increase ATE1 arginyltransferase activity. Interacts with JMJD6 and MRPS14. In terms of processing, post-translationally modified by JMJD6 lysyl-hydroxylase activity at its Lys-rich domain, which inhibits its self-association and nucleolar localization.

Its subcellular location is the nucleus. It is found in the nucleolus. The protein resides in the cytoplasm. Its function is as follows. Participates in nucleolar liquid-liquid phase separation (LLPS) through its N-terminal intrinsically disordered region (IDR). May be involved in ATE1-mediated N-terminal arginylation. The chain is Protein LIAT1 from Homo sapiens (Human).